Consider the following 341-residue polypeptide: Putative gustatory receptor 9a (341 aa).

Residue Met-1 is a topological domain, cytoplasmic. Residues 2-22 (SLWLEHFLTGYFQLCGLVCGW) form a helical membrane-spanning segment. Topologically, residues 23–30 (SGSRLGRL) are extracellular. The helical transmembrane segment at 31 to 51 (LSSTFLVLILIELVGEIETYF) threads the bilayer. The Cytoplasmic portion of the chain corresponds to 52–68 (TEENPDNESVPAYFAKV). Residues 69–89 (IMGVNMAYKMIHAWIALSALF) form a helical membrane-spanning segment. At 90 to 113 (ECRRFRYLLEELPPVKATSFIYRH) the chain is on the extracellular side. The chain crosses the membrane as a helical span at residues 114-134 (LILEIILFACNAFLVLSEYTI). Topologically, residues 135–202 (RGIYLENLRY…LAKVTRSLSH (68 aa)) are cytoplasmic. A helical membrane pass occupies residues 203-223 (LFGLSLLLLNVLCLGDWIIVC). The Extracellular segment spans residues 224–233 (NVYFMVAYLQ). Residues 234-254 (VLPATLFLFGQVMFVVCPTLI) traverse the membrane as a helical segment. Residues 255–318 (KIWSICAASH…GIYHLNLQTL (64 aa)) are Cytoplasmic-facing. The helical transmembrane segment at 319 to 339 (AGMFFFILEALVIFLQFVSLV) threads the bilayer. The Extracellular segment spans residues 340 to 341 (RT).

The protein belongs to the insect chemoreceptor superfamily. Gustatory receptor (GR) family. Gr2a subfamily. Expressed in neurons of the terminal external chemosensory organ of larvae.

It is found in the cell membrane. Functionally, probable gustatory receptor which mediates acceptance or avoidance behavior, depending on its substrates. The chain is Putative gustatory receptor 9a (Gr9a) from Drosophila melanogaster (Fruit fly).